A 503-amino-acid chain; its full sequence is Potassium voltage-gated channel subfamily V member 1 (503 aa).

Topologically, residues 1–213 (MELLPPRGRA…EKPGSCTAAR (213 aa)) are cytoplasmic. A helical transmembrane segment spans residues 214–234 (IFGVISIIFVAVSIVNMALMS). The Extracellular segment spans residues 235-246 (AELSWLDPQLLE). Residues 247–267 (ILEYVCISWFTGEFVLRFLCV) form a helical membrane-spanning segment. At 268-279 (RDRCRFLRKVPN) the chain is on the cytoplasmic side. A helical transmembrane segment spans residues 280 to 300 (IIDLLAILPFYITLLVESLSG). Residues 301 to 312 (SQTTQELENVGR) are Extracellular-facing. The helical; Voltage-sensor transmembrane segment at 313-334 (IVQVLRLLRALRMLKLGRHSTG) threads the bilayer. Residues 335–348 (LRSLGMTITQCYEE) are Cytoplasmic-facing. A helical membrane pass occupies residues 349-369 (VGLLLLFLSVGISIFSTVEYF). The short motif at 395-400 (TVGYGD) is the Selectivity filter element. Residues 410–430 (IVAFMCILSGILVLALPIAII) form a helical membrane-spanning segment. Residues 431-503 (NDRFSACYFT…RSSGGDDFWF (73 aa)) lie on the Cytoplasmic side of the membrane.

The protein belongs to the potassium channel family. V (TC 1.A.1.2) subfamily. Kv8.1/KCNV1 sub-subfamily. In terms of assembly, heteromultimer with KCNB1 and KCNB2. Interacts with KCNC4 and KCND1.

The protein localises to the cell membrane. Its function is as follows. Potassium channel subunit that does not form functional channels by itself. Modulates KCNB1 and KCNB2 channel activity by shifting the threshold for inactivation to more negative values and by slowing the rate of inactivation. Can down-regulate the channel activity of KCNB1, KCNB2, KCNC4 and KCND1, possibly by trapping them in intracellular membranes. The chain is Potassium voltage-gated channel subfamily V member 1 (KCNV1) from Bos taurus (Bovine).